Here is a 138-residue protein sequence, read N- to C-terminus: Cysteine desulfuration protein SufE (138 aa).

The Cysteine persulfide intermediate role is filled by Cys-51.

Belongs to the SufE family. In terms of assembly, homodimer. Interacts with SufS.

It localises to the cytoplasm. Its pathway is cofactor biosynthesis; iron-sulfur cluster biosynthesis. Its function is as follows. Participates in cysteine desulfuration mediated by SufS. Cysteine desulfuration mobilizes sulfur from L-cysteine to yield L-alanine and constitutes an essential step in sulfur metabolism for biosynthesis of a variety of sulfur-containing biomolecules. Functions as a sulfur acceptor for SufS, by mediating the direct transfer of the sulfur atom from the S-sulfanylcysteine of SufS, an intermediate product of cysteine desulfuration process. The chain is Cysteine desulfuration protein SufE from Shigella sonnei (strain Ss046).